Consider the following 211-residue polypeptide: ATP phosphoribosyltransferase (211 aa).

This sequence belongs to the ATP phosphoribosyltransferase family. Short subfamily. Heteromultimer composed of HisG and HisZ subunits.

The protein localises to the cytoplasm. The enzyme catalyses 1-(5-phospho-beta-D-ribosyl)-ATP + diphosphate = 5-phospho-alpha-D-ribose 1-diphosphate + ATP. The protein operates within amino-acid biosynthesis; L-histidine biosynthesis; L-histidine from 5-phospho-alpha-D-ribose 1-diphosphate: step 1/9. Functionally, catalyzes the condensation of ATP and 5-phosphoribose 1-diphosphate to form N'-(5'-phosphoribosyl)-ATP (PR-ATP). Has a crucial role in the pathway because the rate of histidine biosynthesis seems to be controlled primarily by regulation of HisG enzymatic activity. The polypeptide is ATP phosphoribosyltransferase (Lacticaseibacillus paracasei (strain ATCC 334 / BCRC 17002 / CCUG 31169 / CIP 107868 / KCTC 3260 / NRRL B-441) (Lactobacillus paracasei)).